We begin with the raw amino-acid sequence, 329 residues long: ADP-L-glycero-D-manno-heptose-6-epimerase (329 aa).

NADP(+)-binding positions include 10–11 (FI), 31–32 (DD), Lys38, Lys53, 74–78 (QGACS), and Asn91. Tyr138 serves as the catalytic Proton acceptor. Lys142 is an NADP(+) binding site. Asn167 contacts substrate. NADP(+) is bound by residues Val168 and Lys176. Lys176 functions as the Proton acceptor in the catalytic mechanism. Residues Arg178, His185, 199-202 (FAGW), Arg212, and Tyr291 each bind substrate.

Belongs to the NAD(P)-dependent epimerase/dehydratase family. HldD subfamily. Homopentamer. Requires NADP(+) as cofactor.

It catalyses the reaction ADP-D-glycero-beta-D-manno-heptose = ADP-L-glycero-beta-D-manno-heptose. It functions in the pathway nucleotide-sugar biosynthesis; ADP-L-glycero-beta-D-manno-heptose biosynthesis; ADP-L-glycero-beta-D-manno-heptose from D-glycero-beta-D-manno-heptose 7-phosphate: step 4/4. The protein operates within bacterial outer membrane biogenesis; LPS core biosynthesis. Its function is as follows. Catalyzes the interconversion between ADP-D-glycero-beta-D-manno-heptose and ADP-L-glycero-beta-D-manno-heptose via an epimerization at carbon 6 of the heptose. The sequence is that of ADP-L-glycero-D-manno-heptose-6-epimerase from Bordetella parapertussis (strain 12822 / ATCC BAA-587 / NCTC 13253).